Consider the following 278-residue polypeptide: 4-hydroxy-3-methylbut-2-enyl diphosphate reductase (278 aa).

Cysteine 12 is a binding site for [4Fe-4S] cluster. Histidine 40 and histidine 75 together coordinate (2E)-4-hydroxy-3-methylbut-2-enyl diphosphate. 2 residues coordinate dimethylallyl diphosphate: histidine 40 and histidine 75. Isopentenyl diphosphate contacts are provided by histidine 40 and histidine 75. Residue cysteine 97 coordinates [4Fe-4S] cluster. Histidine 125 contacts (2E)-4-hydroxy-3-methylbut-2-enyl diphosphate. Histidine 125 is a binding site for dimethylallyl diphosphate. An isopentenyl diphosphate-binding site is contributed by histidine 125. Catalysis depends on glutamate 127, which acts as the Proton donor. Threonine 157 is a (2E)-4-hydroxy-3-methylbut-2-enyl diphosphate binding site. A [4Fe-4S] cluster-binding site is contributed by cysteine 187. 4 residues coordinate (2E)-4-hydroxy-3-methylbut-2-enyl diphosphate: serine 215, serine 216, asparagine 217, and serine 258. Residues serine 215, serine 216, asparagine 217, and serine 258 each coordinate dimethylallyl diphosphate. Isopentenyl diphosphate is bound by residues serine 215, serine 216, asparagine 217, and serine 258.

The protein belongs to the IspH family. It depends on [4Fe-4S] cluster as a cofactor.

The catalysed reaction is isopentenyl diphosphate + 2 oxidized [2Fe-2S]-[ferredoxin] + H2O = (2E)-4-hydroxy-3-methylbut-2-enyl diphosphate + 2 reduced [2Fe-2S]-[ferredoxin] + 2 H(+). The enzyme catalyses dimethylallyl diphosphate + 2 oxidized [2Fe-2S]-[ferredoxin] + H2O = (2E)-4-hydroxy-3-methylbut-2-enyl diphosphate + 2 reduced [2Fe-2S]-[ferredoxin] + 2 H(+). Its pathway is isoprenoid biosynthesis; dimethylallyl diphosphate biosynthesis; dimethylallyl diphosphate from (2E)-4-hydroxy-3-methylbutenyl diphosphate: step 1/1. The protein operates within isoprenoid biosynthesis; isopentenyl diphosphate biosynthesis via DXP pathway; isopentenyl diphosphate from 1-deoxy-D-xylulose 5-phosphate: step 6/6. Its function is as follows. Catalyzes the conversion of 1-hydroxy-2-methyl-2-(E)-butenyl 4-diphosphate (HMBPP) into a mixture of isopentenyl diphosphate (IPP) and dimethylallyl diphosphate (DMAPP). Acts in the terminal step of the DOXP/MEP pathway for isoprenoid precursor biosynthesis. The sequence is that of 4-hydroxy-3-methylbut-2-enyl diphosphate reductase from Pseudothermotoga lettingae (strain ATCC BAA-301 / DSM 14385 / NBRC 107922 / TMO) (Thermotoga lettingae).